A 173-amino-acid polypeptide reads, in one-letter code: Ribosome maturation factor RimM (173 aa).

The 75-residue stretch at 94–168 (SNESYLCDLL…LIRINPPKGL (75 aa)) folds into the PRC barrel domain.

This sequence belongs to the RimM family. In terms of assembly, binds ribosomal protein uS19.

Its subcellular location is the cytoplasm. Its function is as follows. An accessory protein needed during the final step in the assembly of 30S ribosomal subunit, possibly for assembly of the head region. Essential for efficient processing of 16S rRNA. May be needed both before and after RbfA during the maturation of 16S rRNA. It has affinity for free ribosomal 30S subunits but not for 70S ribosomes. This chain is Ribosome maturation factor RimM, found in Lawsonia intracellularis (strain PHE/MN1-00).